The sequence spans 389 residues: Zinc finger C2HC domain-containing protein 1C homolog (389 aa).

2 disordered regions span residues 16-44 (MLPH…SQQS) and 84-115 (SYPH…GPQS). 2 stretches are compositionally biased toward polar residues: residues 35–44 (YEQGDSSQQS) and 90–102 (GISQ…DSQG). A coiled-coil region spans residues 211-266 (VQIRRLEAAGESLEEEIRRKQILLRGKLKKTEEELRRIQMQKEQAKENENRELQKI). Disordered regions lie at residues 301-320 (REDE…QLSD) and 343-389 (SELS…PQLG). Positions 307-317 (GRSQQNSSPFQ) are enriched in polar residues. Residues 368-382 (SSLSMAPDSSGSSGS) are compositionally biased toward low complexity.

This sequence belongs to the ZC2HC1 family.

The protein is Zinc finger C2HC domain-containing protein 1C homolog (ZC2HC1C) of Pongo abelii (Sumatran orangutan).